The following is a 419-amino-acid chain: uncharacterized protein (419 aa).

13 consecutive transmembrane segments (helical) span residues 5-25 (MIIV…ALII), 26-46 (AAGV…AQQI), 53-73 (FPML…GGEL), 102-122 (VFGG…SVLI), 144-164 (VIDV…VSGV), 170-190 (FVAG…VCWF), 210-230 (ATLA…ILFL), 234-254 (LATP…LSLL), 274-294 (ATGV…VLTF), 309-329 (ISSP…VGMP), 332-352 (MPPA…TIGL), 360-380 (MMVI…TLFI), and 396-416 (LWPF…IPAL).

This sequence belongs to the YiaN/YgiK family.

The protein localises to the cell inner membrane. This is an uncharacterized protein from Sinorhizobium fredii (strain NBRC 101917 / NGR234).